Reading from the N-terminus, the 554-residue chain is DNA mismatch repair protein MutL (554 aa).

Belongs to the DNA mismatch repair MutL/HexB family.

Functionally, this protein is involved in the repair of mismatches in DNA. It is required for dam-dependent methyl-directed DNA mismatch repair. May act as a 'molecular matchmaker', a protein that promotes the formation of a stable complex between two or more DNA-binding proteins in an ATP-dependent manner without itself being part of a final effector complex. This chain is DNA mismatch repair protein MutL, found in Crocosphaera subtropica (strain ATCC 51142 / BH68) (Cyanothece sp. (strain ATCC 51142)).